Reading from the N-terminus, the 386-residue chain is 1-deoxy-D-xylulose 5-phosphate reductoisomerase (386 aa).

Residues T10, G11, S12, I13, G36, N38, and N122 each contribute to the NADPH site. Residue K123 coordinates 1-deoxy-D-xylulose 5-phosphate. E124 is an NADPH binding site. Residue D148 participates in Mn(2+) binding. S149, E150, S174, and H197 together coordinate 1-deoxy-D-xylulose 5-phosphate. E150 contacts Mn(2+). G203 provides a ligand contact to NADPH. Residues S210, N215, K216, and E219 each coordinate 1-deoxy-D-xylulose 5-phosphate. E219 serves as a coordination point for Mn(2+).

The protein belongs to the DXR family. Requires Mg(2+) as cofactor. Mn(2+) is required as a cofactor.

It carries out the reaction 2-C-methyl-D-erythritol 4-phosphate + NADP(+) = 1-deoxy-D-xylulose 5-phosphate + NADPH + H(+). The protein operates within isoprenoid biosynthesis; isopentenyl diphosphate biosynthesis via DXP pathway; isopentenyl diphosphate from 1-deoxy-D-xylulose 5-phosphate: step 1/6. Its function is as follows. Catalyzes the NADPH-dependent rearrangement and reduction of 1-deoxy-D-xylulose-5-phosphate (DXP) to 2-C-methyl-D-erythritol 4-phosphate (MEP). The protein is 1-deoxy-D-xylulose 5-phosphate reductoisomerase of Geotalea uraniireducens (strain Rf4) (Geobacter uraniireducens).